Here is a 2059-residue protein sequence, read N- to C-terminus: Large tegument protein deneddylase (2059 aa).

The deubiquitination activity stretch occupies residues 1 to 230; the sequence is MRIIAGSTNQ…PDIALSLNDF (230 aa). The Peptidase C76 domain maps to 3–220; it reads IIAGSTNQND…TILILKTYKD (218 aa). Active-site residues include cysteine 23, aspartate 155, and histidine 157. The disordered stretch occupies residues 245 to 272; that stretch reads TNTLISKQSPSKRKQEKTSLNSNSLEKK. Residue serine 278 is a region of interest, interaction with inner tegument protein.

It belongs to the herpesviridae large tegument protein family. In terms of assembly, interacts with host CUL1 and CUL4A; these interactions inhibit the E3 ligase activity of cullins. Interacts with inner tegument protein. Interacts with capsid vertex specific component CVC2. Interacts with the major capsid protein/MCP.

The protein resides in the virion tegument. Its subcellular location is the host cytoplasm. The protein localises to the host nucleus. The enzyme catalyses Thiol-dependent hydrolysis of ester, thioester, amide, peptide and isopeptide bonds formed by the C-terminal Gly of ubiquitin (a 76-residue protein attached to proteins as an intracellular targeting signal).. Large tegument protein that plays multiple roles in the viral cycle. During viral entry, remains associated with the capsid while most of the tegument is detached and participates in the capsid transport toward the host nucleus. Plays a role in the routing of the capsid at the nuclear pore complex and subsequent uncoating. Within the host nucleus, acts as a deneddylase and promotes the degradation of nuclear CRLs (cullin-RING ubiquitin ligases) and thereby stabilizes nuclear CRL substrates, while cytoplasmic CRLs remain unaffected. These modifications prevent host cell cycle S-phase progression and create a favorable environment allowing efficient viral genome replication. Participates later in the secondary envelopment of capsids. Indeed, plays a linker role for the association of the outer viral tegument to the capsids together with the inner tegument protein. The sequence is that of Large tegument protein deneddylase (U31) from Human herpesvirus 7 (strain JI) (HHV-7).